We begin with the raw amino-acid sequence, 468 residues long: Cysteine--tRNA ligase (468 aa).

Cys29 contributes to the Zn(2+) binding site. A 'HIGH' region motif is present at residues 31–41 (PTVYNYIHIGN). Zn(2+) is bound by residues Cys209, His234, and Glu238. Positions 266 to 270 (KMSKS) match the 'KMSKS' region motif. Position 269 (Lys269) interacts with ATP.

Belongs to the class-I aminoacyl-tRNA synthetase family. Monomer. The cofactor is Zn(2+).

The protein localises to the cytoplasm. The enzyme catalyses tRNA(Cys) + L-cysteine + ATP = L-cysteinyl-tRNA(Cys) + AMP + diphosphate. This Brevibacillus brevis (strain 47 / JCM 6285 / NBRC 100599) protein is Cysteine--tRNA ligase.